Here is a 523-residue protein sequence, read N- to C-terminus: Probable aminopeptidase NPEPL1 (523 aa).

Positions 260 and 265 each coordinate Zn(2+). K272 is a catalytic residue. Positions 283, 342, and 344 each coordinate Zn(2+). R346 is a catalytic residue.

It belongs to the peptidase M17 family. Requires Zn(2+) as cofactor. Mn(2+) is required as a cofactor. Ubiquitously expressed.

Probably catalyzes the removal of unsubstituted N-terminal amino acids from various peptides. This is Probable aminopeptidase NPEPL1 (NPEPL1) from Homo sapiens (Human).